The sequence spans 846 residues: ATR-interacting protein mus304 (846 aa).

Disordered stretches follow at residues 20–40 (DVSV…FDGI), 90–109 (QGST…QKKP), and 135–162 (EPQK…KTTT). The span at 144 to 162 (TSTSRITTSSISVQQKTTT) shows a compositional bias: low complexity. Coiled coils occupy residues 168–240 (ATQS…LADE) and 327–359 (EYSE…LQAK). The short motif at 504–510 (EELLFDL) is the EEXXXDL motif element. Residues 651–681 (GAVQGSVSNGSTSASVSNPNQNSNSSTTQRG) form a disordered region. Positions 655 to 676 (GSVSNGSTSASVSNPNQNSNSS) are enriched in low complexity.

Belongs to the ATRIP family. In terms of assembly, interacts with ATR/mei-41. As to expression, highly expressed in the oocyte and nurse cells from stage 5 onward and in embryos prior to during nuclear division 14. Then, it decreases to background levels during interphase 14. Weakly or not expressed in stage embryos and imaginal disks.

Its subcellular location is the cytoplasm. Functionally, DNA damage checkpoint protein required for chromosome break repair and for genomic stability during development. This Drosophila melanogaster (Fruit fly) protein is ATR-interacting protein mus304 (mus304).